The chain runs to 654 residues: Probable potassium transport system protein Kup (654 aa).

The next 13 helical transmembrane spans lie at 17-37, 40-60, 71-91, 99-119, 137-157, 164-184, 202-222, 240-260, 281-301, 338-358, 369-389, 394-414, and 423-443; these read GILV…LYVM, IIGL…AIFW, VLIT…LYAL, WLII…IITP, INTV…QQFG, FFAP…ILQI, LLSI…CTTG, ISWI…GAYL, LVMP…AAVI, IYIP…VLHF, GLAI…FMIL, WFII…FLIA, and GYVT…WYTA.

This sequence belongs to the HAK/KUP transporter (TC 2.A.72) family.

The protein localises to the cell inner membrane. It carries out the reaction K(+)(in) + H(+)(in) = K(+)(out) + H(+)(out). In terms of biological role, transport of potassium into the cell. Likely operates as a K(+):H(+) symporter. This is Probable potassium transport system protein Kup from Flavobacterium psychrophilum (strain ATCC 49511 / DSM 21280 / CIP 103535 / JIP02/86).